The following is a 659-amino-acid chain: Interferon-induced GTP-binding protein Mx2 (659 aa).

A Dynamin-type G domain is found at D65–P338. The segment at G75 to S82 is G1 motif. Residue G75 to S82 coordinates GTP. The interval V100–R102 is G2 motif. A G3 motif region spans residues D176–G179. GTP contacts are provided by residues D176 to I180 and T245 to D248. A G4 motif region spans residues T245 to D248. The tract at residues K277–G280 is G5 motif. A disordered region spans residues E547 to Q567. One can recognise a GED domain in the interval M571–G659.

It belongs to the TRAFAC class dynamin-like GTPase superfamily. Dynamin/Fzo/YdjA family.

It localises to the cytoplasm. In terms of biological role, interferon-induced dynamin-like GTPase with antiviral activity against vesicular stomatitis virus (VSV). The chain is Interferon-induced GTP-binding protein Mx2 (Mx2) from Rattus norvegicus (Rat).